A 207-amino-acid chain; its full sequence is Large ribosomal subunit protein uL4 (207 aa).

Residues 43 to 52 show a composition bias toward polar residues; it reads NKRQGTQSAK. Residues 43 to 72 are disordered; that stretch reads NKRQGTQSAKTRAEVRGGGRKPWKQKGTGR. Basic residues predominate over residues 60-71; the sequence is GGRKPWKQKGTG.

It belongs to the universal ribosomal protein uL4 family. In terms of assembly, part of the 50S ribosomal subunit.

Functionally, one of the primary rRNA binding proteins, this protein initially binds near the 5'-end of the 23S rRNA. It is important during the early stages of 50S assembly. It makes multiple contacts with different domains of the 23S rRNA in the assembled 50S subunit and ribosome. Its function is as follows. Forms part of the polypeptide exit tunnel. The chain is Large ribosomal subunit protein uL4 from Alkaliphilus metalliredigens (strain QYMF).